A 506-amino-acid polypeptide reads, in one-letter code: Thyroid hormone receptor alpha (506 aa).

Residues 1-32 (MEQKPSKVECGSDPEENSARSPDGKRKRKNGQ) are disordered. Positions 1-52 (MEQKPSKVECGSDPEENSARSPDGKRKRKNGQCSLKTSMSGYIPSYLDKDEQ) are modulating. Cysteine 53, cysteine 56, cysteine 70, cysteine 73, cysteine 91, cysteine 97, cysteine 107, and cysteine 110 together coordinate Zn(2+). 2 consecutive NR C4-type zinc fingers follow at residues 53 to 73 (CVVCGDKATGYHYRCITCEGC) and 91 to 115 (CKYDSCCVIDKITRNQCQLCRFKKC). A DNA-binding region (nuclear receptor) is located at residues 53-127 (CVVCGDKATG…VGMAMDLVLD (75 aa)). Positions 163-407 (EEWDLIHVAT…EGQQLLGMHV (245 aa)) constitute an NR LBD domain. Residues arginine 228 and serine 277 each contribute to the 3,3',5-triiodo-L-thyronine site. The disordered stretch occupies residues 460 to 506 (GEDDSSEAGSLTSSDEDPEVCEDAAQATQPLPEAPPRADGEGGGGGS).

This sequence belongs to the nuclear hormone receptor family. NR1 subfamily. As to quaternary structure, binds DNA as a dimer; homodimer and heterodimer with RXRB. Interacts with NCOA3 and NCOA6 coactivators, leading to a strong increase of transcription of target genes. Probably interacts with SFPQ. Interacts with C1D. Interacts with AKAP13. Interacts with TP53INP2. Interacts with PER2. Interacts with PER2. Isoform alpha-2 and isoform alpha-1 interact with TACC1, but the interaction with alpha-1 is weaker. The interaction with isoform alpha-1, but not alpha-2, is decreased in the presence of thyroid hormone T3.

The protein resides in the nucleus. The protein localises to the cytoplasm. In terms of biological role, nuclear hormone receptor that can act as a repressor or activator of transcription. High affinity receptor for thyroid hormones, including triiodothyronine and thyroxine. The protein is Thyroid hormone receptor alpha (THRA) of Sus scrofa (Pig).